A 410-amino-acid chain; its full sequence is Protein trichome birefringence-like 34 (410 aa).

Residues Thr-13–Leu-33 traverse the membrane as a helical; Signal-anchor for type II membrane protein segment. The GDS motif signature appears at Gly-133–Ser-135. A DCXHWCLPGXXDXWN motif motif is present at residues Asp-383–Asn-397.

It belongs to the PC-esterase family. TBL subfamily.

It is found in the golgi apparatus membrane. Functionally, may act as a bridging protein that binds pectin and other cell wall polysaccharides. Probably involved in maintaining esterification of pectins. May be involved in the specific O-acetylation of cell wall polymers. The sequence is that of Protein trichome birefringence-like 34 (TBL34) from Arabidopsis thaliana (Mouse-ear cress).